A 266-amino-acid chain; its full sequence is Hydroxyethylthiazole kinase (266 aa).

Met-43 serves as a coordination point for substrate. Positions 119 and 166 each coordinate ATP. Gly-193 is a binding site for substrate.

The protein belongs to the Thz kinase family. Mg(2+) is required as a cofactor.

It catalyses the reaction 5-(2-hydroxyethyl)-4-methylthiazole + ATP = 4-methyl-5-(2-phosphooxyethyl)-thiazole + ADP + H(+). It participates in cofactor biosynthesis; thiamine diphosphate biosynthesis; 4-methyl-5-(2-phosphoethyl)-thiazole from 5-(2-hydroxyethyl)-4-methylthiazole: step 1/1. In terms of biological role, catalyzes the phosphorylation of the hydroxyl group of 4-methyl-5-beta-hydroxyethylthiazole (THZ). This chain is Hydroxyethylthiazole kinase, found in Methanococcus maripaludis (strain DSM 14266 / JCM 13030 / NBRC 101832 / S2 / LL).